Consider the following 234-residue polypeptide: MGMAAESQFHVLAVDDSLFDRKLIERLLQKSSCQVTTVDSGSKALEFLGLRQSTDSNDPNAFSKAPVNHQVVEVNLIITDYCMPGMTGYDLLKKVKESSAFRDIPVVIMSSENVPARISRCLEEGAEEFFLKPVRLADLNKLKPHMMKTKLKNQKLEEIETTSKVENGVPTAVADPEIKDSTNIEIEILPLQQDLLLVQQEEQTLSINNKRKSVEEGISTDRARPRFDGIATAV.

In terms of domain architecture, Response regulatory spans 10–147; that stretch reads HVLAVDDSLF…DLNKLKPHMM (138 aa). Asp-80 bears the 4-aspartylphosphate mark.

Belongs to the ARR family. Type-A subfamily. Interacts with AHP1 and AHP3. Two-component system major event consists of a His-to-Asp phosphorelay between a sensor histidine kinase (HK) and a response regulator (RR). In plants, the His-to-Asp phosphorelay involves an additional intermediate named Histidine-containing phosphotransfer protein (HPt). This multistep phosphorelay consists of a His-Asp-His-Asp sequential transfer of a phosphate group between first a His and an Asp of the HK protein, followed by the transfer to a conserved His of the HPt protein and finally the transfer to an Asp in the receiver domain of the RR protein. In terms of tissue distribution, predominantly expressed in roots.

The protein resides in the nucleus. Functions as a response regulator involved in His-to-Asp phosphorelay signal transduction system. Phosphorylation of the Asp residue in the receiver domain activates the ability of the protein to promote the transcription of target genes. Type-A response regulators seem to act as negative regulators of the cytokinin signaling. The sequence is that of Two-component response regulator ARR9 (ARR9) from Arabidopsis thaliana (Mouse-ear cress).